The primary structure comprises 156 residues: D-aminoacyl-tRNA deacylase (156 aa).

The short motif at 137–138 is the Gly-cisPro motif, important for rejection of L-amino acids element; it reads GP.

Belongs to the DTD family. Homodimer.

The protein localises to the cytoplasm. The catalysed reaction is glycyl-tRNA(Ala) + H2O = tRNA(Ala) + glycine + H(+). It catalyses the reaction a D-aminoacyl-tRNA + H2O = a tRNA + a D-alpha-amino acid + H(+). In terms of biological role, an aminoacyl-tRNA editing enzyme that deacylates mischarged D-aminoacyl-tRNAs. Also deacylates mischarged glycyl-tRNA(Ala), protecting cells against glycine mischarging by AlaRS. Acts via tRNA-based rather than protein-based catalysis; rejects L-amino acids rather than detecting D-amino acids in the active site. By recycling D-aminoacyl-tRNA to D-amino acids and free tRNA molecules, this enzyme counteracts the toxicity associated with the formation of D-aminoacyl-tRNA entities in vivo and helps enforce protein L-homochirality. The sequence is that of D-aminoacyl-tRNA deacylase from Ruegeria sp. (strain TM1040) (Silicibacter sp.).